Consider the following 213-residue polypeptide: MFATKDPEFENRINTNKSPRNAATCRGRYEKQAKGEFLMSDMLAVEQETNNDVRQFLNKINELRNKAPKNEETKHEEHTPDNHEETDHHEAKQQEQAWRGNLRYLDTLNRLDEVLPRKLYERWEKEHTVNDEAVLRALCYFAGTGKNSQLGWCRVGRGTIDKRARLSKNTVKKCLDRLVNHFKLVERTEGYIPGSAERECNEYQLLFKPYNMK.

A compositionally biased stretch (basic and acidic residues) spans 1-11; it reads MFATKDPEFEN. 2 disordered regions span residues 1 to 21 and 63 to 98; these read MFAT…SPRN and LRNK…EQAW. Polar residues predominate over residues 12-21; that stretch reads RINTNKSPRN. Residues 63 to 93 are compositionally biased toward basic and acidic residues; it reads LRNKAPKNEETKHEEHTPDNHEETDHHEAKQ.

This is an uncharacterized protein from Escherichia coli (strain K12).